Reading from the N-terminus, the 365-residue chain is Large ribosomal subunit protein uL3 (365 aa).

The tract at residues 343 to 365 (RPPKKKPPVQRPQITYVSVESKQ) is disordered. Over residues 354–365 (PQITYVSVESKQ) the composition is skewed to polar residues.

This sequence belongs to the universal ribosomal protein uL3 family. In terms of assembly, part of the 50S ribosomal subunit. Forms a cluster with proteins L14 and L24e.

In terms of biological role, one of the primary rRNA binding proteins, it binds directly near the 3'-end of the 23S rRNA, where it nucleates assembly of the 50S subunit. This chain is Large ribosomal subunit protein uL3, found in Pyrococcus furiosus (strain ATCC 43587 / DSM 3638 / JCM 8422 / Vc1).